The following is a 361-amino-acid chain: Cdc42 effector protein 1 (361 aa).

The interval 1-29 is disordered; it reads MPGPQGAGGAPAMNLGKLSPVGWVSSSQG. Phosphoserine is present on residues serine 19 and serine 27. Threonine 34 bears the Phosphothreonine mark. A CRIB domain is found at 38–52; that stretch reads ISPPLGDFRHTMHVG. At serine 39 the chain carries Phosphoserine. At arginine 53 the chain carries Omega-N-methylarginine. A phosphoserine mark is found at serine 65, serine 73, serine 77, serine 101, serine 113, serine 121, serine 139, serine 180, serine 190, serine 192, and serine 195. Residues 161–186 are disordered; it reads CTISRLPRPEKPRDRDRDSSFPAEPE. Positions 167 to 186 are enriched in basic and acidic residues; that stretch reads PRPEKPRDRDRDSSFPAEPE. Disordered stretches follow at residues 218 to 300 and 320 to 361; these read EGSA…SRHH and SWGS…EVKV. 4 tandem repeats follow at residues 220–226, 229–235, 236–242, and 243–249. A 4 X 7 AA tandem repeats of [PT]-[AT]-A-[ENT]-[PT]-[PTS]-[AG] region spans residues 220–249; the sequence is SAAETPAPAPAASPPASVANPPAPASSPSL. 3 positions are modified to phosphoserine: serine 270, serine 320, and serine 323. The span at 332 to 347 shows a compositional bias: polar residues; it reads QAGSRTPVPSTVQANT. The segment covering 351–361 has biased composition (acidic residues); sequence ADAEEDDEVKV.

Belongs to the BORG/CEP family. Interacts with RHOQ and CDC42, in a GTP-dependent manner.

The protein resides in the endomembrane system. The protein localises to the cytoplasm. It localises to the cytoskeleton. In terms of biological role, probably involved in the organization of the actin cytoskeleton. Induced membrane extensions in fibroblasts. This chain is Cdc42 effector protein 1, found in Bos taurus (Bovine).